The following is a 736-amino-acid chain: 3',5'-cyclic-AMP phosphodiesterase 4B (736 aa).

3 disordered regions span residues 51 to 78 (QLPP…TTLP), 189 to 209 (LHGT…SRVN), and 282 to 301 (KQND…KKKK). Phosphoserine is present on Ser-290. Positions 330-659 (VNTENEDHLA…NWYQSMIPQS (330 aa)) constitute a PDEase domain. His-406 serves as the catalytic Proton donor. His-406 is a 3',5'-cyclic AMP binding site. 2 residues coordinate AMP: His-406 and His-410. Zn(2+)-binding residues include His-410, His-446, Asp-447, and Asp-564. Asp-447, Asp-564, Gln-615, and Phe-618 together coordinate AMP. Mg(2+) is bound at residue Asp-447. Asp-447 is a binding site for Mn(2+). Positions 615 and 618 each coordinate 3',5'-cyclic AMP. Ser-659 and Ser-661 each carry phosphoserine. The segment at 685–736 (DEEDSEGPEKEGEGHSYFSSTKTLCVIDPENRDSLGETDIDIATEDKSPVDT) is disordered.

It belongs to the cyclic nucleotide phosphodiesterase family. PDE4 subfamily. In terms of assembly, interacts with DISC1. It depends on Zn(2+) as a cofactor. Mg(2+) is required as a cofactor. Mn(2+) serves as cofactor. As to expression, expressed in brain, heart, lung and skeletal muscle. Expressed in white blood cells. Brain-specific isoform.

The protein resides in the cytoplasm. It localises to the cell membrane. The enzyme catalyses 3',5'-cyclic AMP + H2O = AMP + H(+). It participates in purine metabolism; 3',5'-cyclic AMP degradation; AMP from 3',5'-cyclic AMP: step 1/1. Inhibited by rolipram. Functionally, hydrolyzes the second messenger cAMP, which is a key regulator of many important physiological processes. May be involved in mediating central nervous system effects of therapeutic agents ranging from antidepressants to antiasthmatic and anti-inflammatory agents. The chain is 3',5'-cyclic-AMP phosphodiesterase 4B from Homo sapiens (Human).